The primary structure comprises 252 residues: 3-deoxy-manno-octulosonate cytidylyltransferase (252 aa).

This sequence belongs to the KdsB family.

The protein localises to the cytoplasm. The catalysed reaction is 3-deoxy-alpha-D-manno-oct-2-ulosonate + CTP = CMP-3-deoxy-beta-D-manno-octulosonate + diphosphate. It functions in the pathway nucleotide-sugar biosynthesis; CMP-3-deoxy-D-manno-octulosonate biosynthesis; CMP-3-deoxy-D-manno-octulosonate from 3-deoxy-D-manno-octulosonate and CTP: step 1/1. Its pathway is bacterial outer membrane biogenesis; lipopolysaccharide biosynthesis. Functionally, activates KDO (a required 8-carbon sugar) for incorporation into bacterial lipopolysaccharide in Gram-negative bacteria. The polypeptide is 3-deoxy-manno-octulosonate cytidylyltransferase (Xylella fastidiosa (strain Temecula1 / ATCC 700964)).